A 266-amino-acid chain; its full sequence is MYFPPSSVPKRLVLVHISAVVAIKLLLIRSVSSLNMTNAYLQHKCIVSEGKYQPGSVYEKNLNIIIRASSAGDFRSGFDLVFRGKGSNFVTLMYQCRGDSYWSRCRSCYTTALSALRKRCSRNKGGIIWYDQCLMEISSIRNEGKLDYNNNFCMSNTKNASGSPLEFKQKMVDFLLNLGLKATSEDNMDKYNQAVMYAMGEERVGTKKLYAMVQCTKDLWLKTCYACLEWIILKESDCCDGKLGGRVFSTSCNYRYELYPFIKPTV.

The N-terminal stretch at 1–33 (MYFPPSSVPKRLVLVHISAVVAIKLLLIRSVSS) is a signal peptide. 2 consecutive Gnk2-homologous domains span residues 40-142 (YLQH…SIRN) and 148-261 (YNNN…LYPF).

Belongs to the cysteine-rich repeat secretory protein family.

It is found in the secreted. This Arabidopsis thaliana (Mouse-ear cress) protein is Putative cysteine-rich repeat secretory protein 20 (CRRSP20).